Here is a 139-residue protein sequence, read N- to C-terminus: Diacylglycerol acyltransferase/mycolyltransferase Ag85A (139 aa).

Catalysis depends on serine 10, which acts as the Nucleophile. Substrate contacts are provided by serine 10 and aspartate 38. Glutamate 114 is a catalytic residue. Residues 116–119 (FVRT) and lysine 123 each bind substrate.

The protein belongs to the mycobacterial A85 antigen family. In terms of assembly, homodimer.

The protein resides in the secreted. The protein localises to the cell wall. Its subcellular location is the cytoplasm. It carries out the reaction an acyl-CoA + a 1,2-diacyl-sn-glycerol = a triacyl-sn-glycerol + CoA. The catalysed reaction is 2 alpha,alpha'-trehalose 6-mycolate = alpha,alpha'-trehalose 6,6'-bismycolate + alpha,alpha-trehalose. Functionally, the antigen 85 proteins (FbpA, FbpB, FbpC) are responsible for the high affinity of mycobacteria for fibronectin, a large adhesive glycoprotein, which facilitates the attachment of M.tuberculosis to murine alveolar macrophages (AMs). They also help to maintain the integrity of the cell wall by catalyzing the transfer of mycolic acids to cell wall arabinogalactan, and through the synthesis of alpha,alpha-trehalose dimycolate (TDM, cord factor). They catalyze the transfer of a mycoloyl residue from one molecule of alpha,alpha-trehalose monomycolate (TMM) to another TMM, leading to the formation of TDM. FbpA mediates triacylglycerol (TAG) formation with long-chain acyl-CoA as the acyl donor and 1,2-dipalmitoyl-sn-glycerol (1,2-dipalmitin) as the acyl acceptor. It has a preference for C26:0-CoA over C18:1-CoA. The protein is Diacylglycerol acyltransferase/mycolyltransferase Ag85A (fbpA) of Mycobacterium marinum.